Here is a 774-residue protein sequence, read N- to C-terminus: Lysyl oxidase homolog 2 (774 aa).

The first 25 residues, 1–25 (MERPLCSHLCSCLAMLALLSPLSLA), serve as a signal peptide directing secretion. SRCR domains are found at residues 58 to 159 (LRLA…VVCS), 188 to 302 (IRAI…VSCV), 326 to 425 (VRLR…VRCN), and 435 to 544 (LRLN…VACS). 9 disulfide bridges follow: Cys-84–Cys-148, Cys-97–Cys-158, Cys-128–Cys-138, Cys-218–Cys-291, Cys-231–Cys-301, Cys-265–Cys-275, Cys-351–Cys-414, Cys-364–Cys-424, and Cys-395–Cys-405. Asn-288 carries N-linked (GlcNAc...) asparagine glycosylation. Asn-455 carries an N-linked (GlcNAc...) (complex) asparagine glycan. 3 disulfide bridges follow: Cys-464–Cys-530, Cys-477–Cys-543, and Cys-511–Cys-521. The interval 548–751 (PDLVLNAEMV…WMYNCHIGGS (204 aa)) is lysyl-oxidase like. Ca(2+) is bound by residues Asp-549 and Leu-550. Disulfide bonds link Cys-573-Cys-625, Cys-579-Cys-695, Cys-657-Cys-673, and Cys-663-Cys-685. Cu cation-binding residues include His-626, His-628, and His-630. N-linked (GlcNAc...) (complex) asparagine glycosylation is present at Asn-644. Residues 653–689 (KASFCLEDTECEGDIQKNYECANFGDQGITMGCWDMY) constitute a cross-link (lysine tyrosylquinone (Lys-Tyr)). Position 689 is a 2',4',5'-topaquinone (Tyr-689). Ca(2+)-binding residues include Glu-722, Asp-724, Asn-727, and Asn-728. Cysteines 732 and 746 form a disulfide.

Belongs to the lysyl oxidase family. Component of some chromatin repressor complex. Interacts with SNAI1. Interacts with TAF10. Interacts with HSPA5. Interacts with EFEMP2. It depends on Cu cation as a cofactor. Lysine tyrosylquinone residue is required as a cofactor. The lysine tyrosylquinone cross-link (LTQ) is generated by condensation of the epsilon-amino group of a lysine with a topaquinone produced by oxidation of tyrosine. Post-translationally, N-glycosylated. N-glycosylation on Asn-455 and Asn-644 may be essential for proper folding and secretion; may be composed of a fucosylated carbohydrates attached to a trimannose N-linked glycan core. In terms of tissue distribution, expressed in many tissues. Highest expression in reproductive tissues, placenta, uterus and prostate. In esophageal epithelium, expressed in the basal, prickle and granular cell layers. Up-regulated in a number of cancers cells and tissues.

Its subcellular location is the secreted. The protein localises to the extracellular space. It is found in the extracellular matrix. It localises to the basement membrane. The protein resides in the nucleus. Its subcellular location is the chromosome. The protein localises to the endoplasmic reticulum. It carries out the reaction L-lysyl-[protein] + O2 + H2O = (S)-2-amino-6-oxohexanoyl-[protein] + H2O2 + NH4(+). With respect to regulation, according to some reports, it is inhibited by beta-aminopropionitrile (BAPN). According to another report, it is not inhibited by beta-aminopropionitrile (BAPN). Specifically inhibited by a mouse monoclonal antibody AB0023, inhibition occurs in a non-competitive manner. Functionally, mediates the post-translational oxidative deamination of lysine residues on target proteins leading to the formation of deaminated lysine (allysine). Acts as a transcription corepressor and specifically mediates deamination of trimethylated 'Lys-4' of histone H3 (H3K4me3), a specific tag for epigenetic transcriptional activation. Shows no activity against histone H3 when it is trimethylated on 'Lys-9' (H3K9me3) or 'Lys-27' (H3K27me3) or when 'Lys-4' is monomethylated (H3K4me1) or dimethylated (H3K4me2). Also mediates deamination of methylated TAF10, a member of the transcription factor IID (TFIID) complex, which induces release of TAF10 from promoters, leading to inhibition of TFIID-dependent transcription. LOXL2-mediated deamination of TAF10 results in transcriptional repression of genes required for embryonic stem cell pluripotency including POU5F1/OCT4, NANOG, KLF4 and SOX2. Involved in epithelial to mesenchymal transition (EMT) via interaction with SNAI1 and participates in repression of E-cadherin CDH1, probably by mediating deamination of histone H3. During EMT, involved with SNAI1 in negatively regulating pericentromeric heterochromatin transcription. SNAI1 recruits LOXL2 to pericentromeric regions to oxidize histone H3 and repress transcription which leads to release of heterochromatin component CBX5/HP1A, enabling chromatin reorganization and acquisition of mesenchymal traits. Interacts with the endoplasmic reticulum protein HSPA5 which activates the IRE1-XBP1 pathway of the unfolded protein response, leading to expression of several transcription factors involved in EMT and subsequent EMT induction. Involved in E-cadherin repression following hypoxia, a hallmark of EMT believed to amplify tumor aggressiveness, suggesting that it may play a role in tumor progression. When secreted into the extracellular matrix, promotes cross-linking of extracellular matrix proteins by mediating oxidative deamination of peptidyl lysine residues in precursors to fibrous collagen and elastin. Acts as a regulator of sprouting angiogenesis, probably via collagen IV scaffolding. Acts as a regulator of chondrocyte differentiation, probably by regulating expression of factors that control chondrocyte differentiation. In Homo sapiens (Human), this protein is Lysyl oxidase homolog 2 (LOXL2).